The primary structure comprises 185 residues: ATP-dependent protease subunit HslV (185 aa).

Residue Thr-12 is part of the active site. Na(+) is bound by residues Ala-168, Cys-171, and Thr-174.

This sequence belongs to the peptidase T1B family. HslV subfamily. In terms of assembly, a double ring-shaped homohexamer of HslV is capped on each side by a ring-shaped HslU homohexamer. The assembly of the HslU/HslV complex is dependent on binding of ATP.

The protein resides in the cytoplasm. It carries out the reaction ATP-dependent cleavage of peptide bonds with broad specificity.. With respect to regulation, allosterically activated by HslU binding. Its function is as follows. Protease subunit of a proteasome-like degradation complex believed to be a general protein degrading machinery. The chain is ATP-dependent protease subunit HslV from Cereibacter sphaeroides (strain ATCC 17023 / DSM 158 / JCM 6121 / CCUG 31486 / LMG 2827 / NBRC 12203 / NCIMB 8253 / ATH 2.4.1.) (Rhodobacter sphaeroides).